The sequence spans 923 residues: Periodic tryptophan protein 2 (923 aa).

5 WD repeats span residues G12–Y52, E53–F93, N94–Q132, G144–A183, and G189–D228. S225 and S232 each carry phosphoserine. WD repeat units follow at residues A258–Q297, M300–K340, G343–T382, E385–T424, T428–S470, G471–E510, E513–N552, and E575–R614. 2 positions are modified to phosphoserine: S651 and S664. Positions L653 to K674 are disordered. The WD 14 repeat unit spans residues R676 to P714. 2 stretches are compositionally biased toward acidic residues: residues K869–G893 and D911–P923. Residues K869–P923 are disordered. 2 positions are modified to phosphoserine: S912 and S913.

Belongs to the WD repeat PWP2 family. As to quaternary structure, interacts with snoRNA U3. Interacts with MPP10. Component of the ribosomal small subunit (SSU) processome composed of at least 40 protein subunits and snoRNA U3.

Its subcellular location is the nucleus. The protein resides in the nucleolus. In terms of biological role, required for bud-site selection and cell separation. Also involved in nucleolar processing of pre-18S ribosomal RNA. The chain is Periodic tryptophan protein 2 (PWP2) from Saccharomyces cerevisiae (strain ATCC 204508 / S288c) (Baker's yeast).